A 23-amino-acid chain; its full sequence is Keratin (23 aa).

The region spanning 1 to 23 (YSSQLAQVQGLIGNVESQLAEIR) is the IF rod domain. Positions 1-23 (YSSQLAQVQGLIGNVESQLAEIR) are coil 2.

Belongs to the intermediate filament family.

In Cervus elaphus (Red deer), this protein is Keratin.